The sequence spans 232 residues: Octanoyltransferase (232 aa).

The BPL/LPL catalytic domain maps to 33-216 (GRAQDTVILL…HLVRALSNGS (184 aa)). Substrate-binding positions include 71–78 (RGGRITWH), 146–148 (AIG), and 159–161 (GFA). Cys-177 (acyl-thioester intermediate) is an active-site residue.

The protein belongs to the LipB family.

The protein localises to the cytoplasm. The enzyme catalyses octanoyl-[ACP] + L-lysyl-[protein] = N(6)-octanoyl-L-lysyl-[protein] + holo-[ACP] + H(+). The protein operates within protein modification; protein lipoylation via endogenous pathway; protein N(6)-(lipoyl)lysine from octanoyl-[acyl-carrier-protein]: step 1/2. Catalyzes the transfer of endogenously produced octanoic acid from octanoyl-acyl-carrier-protein onto the lipoyl domains of lipoate-dependent enzymes. Lipoyl-ACP can also act as a substrate although octanoyl-ACP is likely to be the physiological substrate. This is Octanoyltransferase from Clavibacter sepedonicus (Clavibacter michiganensis subsp. sepedonicus).